The sequence spans 216 residues: Probable calcium-binding protein CML35 (216 aa).

The segment at 18-58 (TKSKASVSRSEPSSFSSNASSSSSDGSYGNLKQGPTATPIS) is disordered. The segment covering 23–44 (SVSRSEPSSFSSNASSSSSDGS) has biased composition (low complexity). EF-hand domains follow at residues 66–101 (DFYTELVQAFKLIDRDDDGVVSRGDLAALISRLSHE), 103–138 (PSQEEVSLMLREVDGGDGGCISLEDLASRVAGTSGE), 141–176 (VETEELREVFEIFDVDRNGKISAEELHRVFGVIGDE), and 178–213 (CTLEECMRMIATVDGNGDGFVCFDDFCRMMVPAMND). Ca(2+) contacts are provided by Asp-79, Asp-81, Asp-83, and Asp-90. Residues Asp-154, Asp-156, Asn-158, Lys-160, Glu-165, Asp-191, Asn-193, Asp-195, and Asp-202 each coordinate Ca(2+).

Its function is as follows. Potential calcium sensor. The polypeptide is Probable calcium-binding protein CML35 (CML35) (Arabidopsis thaliana (Mouse-ear cress)).